A 447-amino-acid polypeptide reads, in one-letter code: Argininosuccinate synthase (447 aa).

ATP-binding positions include A17 to S25 and A43. L-citrulline is bound at residue Y99. Positions 129 and 131 each coordinate ATP. L-aspartate is bound by residues T131, N135, and D136. N135 is a binding site for L-citrulline. D136 lines the ATP pocket. Residues R139 and S192 each contribute to the L-citrulline site. D194 provides a ligand contact to ATP. L-citrulline is bound by residues T201, E203, and E280.

Belongs to the argininosuccinate synthase family. Type 2 subfamily. As to quaternary structure, homotetramer.

It is found in the cytoplasm. It catalyses the reaction L-citrulline + L-aspartate + ATP = 2-(N(omega)-L-arginino)succinate + AMP + diphosphate + H(+). The protein operates within amino-acid biosynthesis; L-arginine biosynthesis; L-arginine from L-ornithine and carbamoyl phosphate: step 2/3. The polypeptide is Argininosuccinate synthase (Citrobacter koseri (strain ATCC BAA-895 / CDC 4225-83 / SGSC4696)).